The following is a 267-amino-acid chain: Trehalose-phosphate phosphatase (267 aa).

D20 acts as the Nucleophile in catalysis. The Mg(2+) site is built by D20, D22, and D198. 20 to 22 (DLD) provides a ligand contact to substrate.

The protein belongs to the trehalose phosphatase family. Mg(2+) is required as a cofactor.

The catalysed reaction is alpha,alpha-trehalose 6-phosphate + H2O = alpha,alpha-trehalose + phosphate. Its pathway is glycan biosynthesis; trehalose biosynthesis. Its function is as follows. Removes the phosphate from trehalose 6-phosphate to produce free trehalose. The protein is Trehalose-phosphate phosphatase (otsB) of Salmonella typhimurium (strain LT2 / SGSC1412 / ATCC 700720).